The primary structure comprises 363 residues: Somatostatin receptor type 5 (363 aa).

Over 1-35 the chain is Extracellular; sequence MEPLSLASTPSWNASAASSGNHNWSLVGSASPMGA. N-linked (GlcNAc...) asparagine glycans are attached at residues asparagine 13 and asparagine 23. A helical membrane pass occupies residues 36–63; that stretch reads RAVLVPVLYLLVCTVGLSGNTLVIYVVL. The Cytoplasmic segment spans residues 64–73; the sequence is RHAKMKTVTN. The chain crosses the membrane as a helical span at residues 74–99; that stretch reads VYILNLAVADVLFMLGLPFLATQNAV. Over 100–111 the chain is Extracellular; that stretch reads VSYWPFGSFLCR. An intrachain disulfide couples cysteine 110 to cysteine 185. The helical transmembrane segment at 112-133 threads the bilayer; it reads LVMTLDGINQFTSIFCLMVMSV. Residues 134-155 are Cytoplasmic-facing; the sequence is DRYLAVVHPLRSARWRRPRVAK. Residues 156–176 form a helical membrane-spanning segment; the sequence is MASAAVWVFSLLMSLPLLVFA. The Extracellular portion of the chain corresponds to 177–196; sequence DVQEGWGTCNLSWPEPVGLW. Asparagine 186 is a glycosylation site (N-linked (GlcNAc...) asparagine). Residues 197-221 traverse the membrane as a helical segment; that stretch reads GAAFITYTSVLGFFGPLLVICLCYL. Topologically, residues 222-247 are cytoplasmic; it reads LIVVKVKAAGMRVGSSRRRRSEPKVT. Residues 248–273 form a helical membrane-spanning segment; that stretch reads RMVVVVVLVFVGCWLPFFIVNIVNLA. Over 274-283 the chain is Extracellular; it reads FTLPEEPTSA. A helical membrane pass occupies residues 284–308; sequence GLYFFVVVLSYANSCANPLLYGFLS. Residues 309–363 are Cytoplasmic-facing; the sequence is DNFRQSFRKVLCLRRGYGMEDADAIEPRPDKSGRPQATLPTRSCEANGLMQTSRI. Cysteine 320 is lipidated: S-palmitoyl cysteine; by ZDHHC5. The disordered stretch occupies residues 331–363; it reads DAIEPRPDKSGRPQATLPTRSCEANGLMQTSRI.

It belongs to the G-protein coupled receptor 1 family. As to quaternary structure, heterodimer with SSTR2. Heterodimerization with SSTR2 increases cell growth inhibition activity of SSTR2. Palmitoylated at Cys-320 by ZDHHC5, but not ZDHHC8. Palmitoylation creates an additional intracellular loop which is thought to be important for efficient coupling to G-proteins and may target the protein to lipid rafts. Prominent in the pituitary and small intestine. Low levels in islets and spleen. Not detected in kidney, pancreas, cerebellum, or cortex.

The protein resides in the cell membrane. In terms of biological role, receptor for somatostatin-28. The activity of this receptor is mediated by G proteins which inhibit adenylyl cyclase. Increases cell growth inhibition activity of SSTR2 following heterodimerization. This is Somatostatin receptor type 5 (Sstr5) from Rattus norvegicus (Rat).